The chain runs to 382 residues: Dodecanoyl-[acyl-carrier-protein] hydrolase, chloroplastic (382 aa).

The N-terminal 83 residues, 1-83 (MATTSLASAF…FSAAEKQWTN (83 aa)), are a transit peptide targeting the chloroplast. Active-site residues include asparagine 283, histidine 285, and cysteine 320.

The protein belongs to the acyl-ACP thioesterase family. Forms homodimers. As to expression, expressed in developing cotyledons. Not detected in leaves.

It is found in the plastid. Its subcellular location is the chloroplast. It carries out the reaction dodecanoyl-[ACP] + H2O = dodecanoate + holo-[ACP] + H(+). In terms of biological role, plays an essential role in chain termination during de novo fatty acid synthesis. High thioesterase activity for lauroyl-ACP versus other acyl-ACPs. This chain is Dodecanoyl-[acyl-carrier-protein] hydrolase, chloroplastic, found in Umbellularia californica (California bay laurel).